A 333-amino-acid chain; its full sequence is Nucleoid-associated protein (333 aa).

This sequence belongs to the YejK family.

The protein localises to the cytoplasm. The protein resides in the nucleoid. This chain is Nucleoid-associated protein, found in Metapseudomonas resinovorans (Pseudomonas resinovorans).